Reading from the N-terminus, the 397-residue chain is N(6)-adenosine-methyltransferase non-catalytic subunit METTL14 (397 aa).

Disordered regions lie at residues 37 to 67 (NAEDINSSRQLNSGGQREEEDGGASSSKKTP) and 368 to 397 (ELLRPKSPPPNSKVLRGRGRGFPRGRGRPR). The segment covering 40–51 (DINSSRQLNSGG) has biased composition (polar residues). Residues 382 to 397 (LRGRGRGFPRGRGRPR) show a composition bias toward basic residues.

Belongs to the MT-A70-like family. In terms of assembly, component of the WMM complex, a N6-methyltransferase complex composed of a catalytic subcomplex, named MAC, and of an associated subcomplex, named MACOM. The MAC subcomplex is composed of Ime4/Mettl3 and Mettl14. The MACOM subcomplex is composed of fl(2)d, Flacc/Xio, Hakai, vir, and, in some cases of nito.

The protein localises to the nucleus. In terms of biological role, non-catalytic component of the WMM complex, a complex that mediates N6-methyladenosine (m6A) methylation of mRNAs, a modification that plays a role in the efficiency of mRNA splicing and is required for sex determination. In the heterodimer formed with Ime4/Mettl3, Mettl14 constitutes the RNA-binding scaffold that recognizes the substrate rather than the catalytic core. Required for sex determination and dosage compensation via Sxl alternative splicing: m6A methylation acts as a key regulator of Sxl pre-mRNA and promotes female-specific alternative splicing of Sxl, which determines female physiognomy. M6A methylation is also required for neuronal functions. This is N(6)-adenosine-methyltransferase non-catalytic subunit METTL14 from Drosophila melanogaster (Fruit fly).